A 329-amino-acid chain; its full sequence is Vacuolar protein sorting-associated protein 26B-like (329 aa).

Belongs to the VPS26 family.

It is found in the cytoplasm. The protein localises to the membrane. Its function is as follows. Probable component of the retromer complex, a complex required to retrieve lysosomal enzyme receptors (IGF2R and M6PR) from endosomes to the trans-Golgi network. This Danio rerio (Zebrafish) protein is Vacuolar protein sorting-associated protein 26B-like (vps26bl).